The primary structure comprises 247 residues: tRNA (guanine-N(1)-)-methyltransferase (247 aa).

S-adenosyl-L-methionine contacts are provided by residues G113 and 133–138 (IGDFVM).

This sequence belongs to the RNA methyltransferase TrmD family. Homodimer.

Its subcellular location is the cytoplasm. It carries out the reaction guanosine(37) in tRNA + S-adenosyl-L-methionine = N(1)-methylguanosine(37) in tRNA + S-adenosyl-L-homocysteine + H(+). Functionally, specifically methylates guanosine-37 in various tRNAs. The chain is tRNA (guanine-N(1)-)-methyltransferase from Vibrio campbellii (strain ATCC BAA-1116).